Here is an 878-residue protein sequence, read N- to C-terminus: Phosphoenolpyruvate carboxylase (878 aa).

Catalysis depends on residues His-140 and Lys-545.

Belongs to the PEPCase type 1 family. Mg(2+) serves as cofactor.

The catalysed reaction is oxaloacetate + phosphate = phosphoenolpyruvate + hydrogencarbonate. Forms oxaloacetate, a four-carbon dicarboxylic acid source for the tricarboxylic acid cycle. The polypeptide is Phosphoenolpyruvate carboxylase (Pseudomonas paraeruginosa (strain DSM 24068 / PA7) (Pseudomonas aeruginosa (strain PA7))).